Consider the following 59-residue polypeptide: Temporin-CDYd (59 aa).

An N-terminal signal peptide occupies residues 1–22 (MFTLKKSMLLLLFLGTISLTLC). A propeptide spanning residues 23–42 (EEERDANEEEENGGEVKEEE) is cleaved from the precursor.

Belongs to the frog skin active peptide (FSAP) family. Temporin subfamily. Expressed by the skin glands.

The protein resides in the secreted. Antimicrobial peptide. The chain is Temporin-CDYd from Rana dybowskii (Dybovsky's frog).